Consider the following 293-residue polypeptide: Deubiquitinase OTUD6B (293 aa).

Disordered regions lie at residues 1–43 and 57–114; these read MEEV…RRKQ and QKHE…LEKE. An OTU domain is found at 147–284; it reads LQIKEISSDG…GEHYNSVEPL (138 aa). The interval 152–158 is cys-loop; the sequence is ISSDGHC. D155 is a catalytic residue. C158 functions as the Nucleophile in the catalytic mechanism. Residues 219 to 229 form a variable-loop region; that stretch reads VADTAAWGGQL. Positions 267 to 277 are his-loop; the sequence is YMRHAYGLGEH. The active site involves H277.

The enzyme catalyses Thiol-dependent hydrolysis of ester, thioester, amide, peptide and isopeptide bonds formed by the C-terminal Gly of ubiquitin (a 76-residue protein attached to proteins as an intracellular targeting signal).. In terms of biological role, deubiquitinating enzyme that may play a role in the ubiquitin-dependent regulation of different cellular processes. This chain is Deubiquitinase OTUD6B (otud6b), found in Danio rerio (Zebrafish).